A 239-amino-acid polypeptide reads, in one-letter code: Aldehyde dehydrogenase, dimeric NADP-preferring (239 aa).

Cysteine 30 is a catalytic residue.

It belongs to the aldehyde dehydrogenase family. Homodimer.

It localises to the cytoplasm. It carries out the reaction an aldehyde + NAD(+) + H2O = a carboxylate + NADH + 2 H(+). It catalyses the reaction octanal + NAD(+) + H2O = octanoate + NADH + 2 H(+). In terms of biological role, ALDHs play a major role in the detoxification of alcohol-derived acetaldehyde. They are involved in the metabolism of corticosteroids, biogenic amines, neurotransmitters, and lipid peroxidation. Oxidizes medium and long chain aldehydes into non-toxic fatty acids. Preferentially oxidizes aromatic aldehyde substrates. Comprises about 50 percent of corneal epithelial soluble proteins. May play a role in preventing corneal damage caused by ultraviolet light. This chain is Aldehyde dehydrogenase, dimeric NADP-preferring (ALDH3A1), found in Bos taurus (Bovine).